Consider the following 420-residue polypeptide: Trichothecene biosynthesis transcription regulator TRI10 (420 aa).

The protein belongs to the TRI10 transcription regulator family.

The protein localises to the nucleus. Transcriptional activator of all of the trichothecene biosynthesis genes. Acts upstream of the cluster-encoded transcription factor TRI6 and is necessary for full expression of both the other trichothecene genes and the genes for the primary metabolic pathway that precedes the trichothecene biosynthetic pathway. The protein is Trichothecene biosynthesis transcription regulator TRI10 of Fusarium sporotrichioides.